A 144-amino-acid polypeptide reads, in one-letter code: Large ribosomal subunit protein uL16 (144 aa).

It belongs to the universal ribosomal protein uL16 family. In terms of assembly, part of the 50S ribosomal subunit.

Its function is as follows. Binds 23S rRNA and is also seen to make contacts with the A and possibly P site tRNAs. The protein is Large ribosomal subunit protein uL16 of Bacillus licheniformis (strain ATCC 14580 / DSM 13 / JCM 2505 / CCUG 7422 / NBRC 12200 / NCIMB 9375 / NCTC 10341 / NRRL NRS-1264 / Gibson 46).